A 514-amino-acid polypeptide reads, in one-letter code: Na(+)/H(+) antiporter NhaB (514 aa).

The next 12 membrane-spanning stretches (helical) occupy residues 23–43 (LALLVFLIVNPFIFLANPFIA), 63–83 (PLLPGGLLAIEAVIIGMTSAA), 97–117 (LLLMFMVAGIYFMKQLLLFIF), 120–140 (LLLSIRSKMVLSLAFCVAAAF), 144–164 (FLDALTVVAVVISVAVGFYGI), 202–222 (LMMHAGVGTALGGVMTMVGEP), 238–258 (FFLRMSPVTVPVLVCGLLTCM), 303–323 (AVIGVWLVTALALHLAEVGLI), 357–377 (LTVFFSIVAVIIDQHLFAPII), 391–411 (LFYLFNGLLSSISDNVFVGTI), 447–467 (ATPNGQAAFLFLLTSALAPLI), and 475–495 (VWMALPYTIVLTLIGLLCVEF).

It belongs to the NhaB Na(+)/H(+) (TC 2.A.34) antiporter family.

The protein resides in the cell inner membrane. It carries out the reaction 2 Na(+)(in) + 3 H(+)(out) = 2 Na(+)(out) + 3 H(+)(in). Na(+)/H(+) antiporter that extrudes sodium in exchange for external protons. This chain is Na(+)/H(+) antiporter NhaB, found in Salmonella choleraesuis (strain SC-B67).